The following is a 389-amino-acid chain: LL-diaminopimelate aminotransferase (389 aa).

Substrate contacts are provided by Y16 and G41. Pyridoxal 5'-phosphate is bound by residues Y70, 104-105 (SK), Y129, N179, Y210, and 239-241 (SLS). Positions 105, 129, and 179 each coordinate substrate. N6-(pyridoxal phosphate)lysine is present on K242. R250 contributes to the pyridoxal 5'-phosphate binding site. R369 serves as a coordination point for substrate.

This sequence belongs to the class-I pyridoxal-phosphate-dependent aminotransferase family. LL-diaminopimelate aminotransferase subfamily. As to quaternary structure, homodimer. It depends on pyridoxal 5'-phosphate as a cofactor.

The catalysed reaction is (2S,6S)-2,6-diaminopimelate + 2-oxoglutarate = (S)-2,3,4,5-tetrahydrodipicolinate + L-glutamate + H2O + H(+). It functions in the pathway amino-acid biosynthesis; L-lysine biosynthesis via DAP pathway; LL-2,6-diaminopimelate from (S)-tetrahydrodipicolinate (aminotransferase route): step 1/1. Its function is as follows. Involved in the synthesis of meso-diaminopimelate (m-DAP or DL-DAP), required for both lysine and peptidoglycan biosynthesis. Catalyzes the direct conversion of tetrahydrodipicolinate to LL-diaminopimelate. This chain is LL-diaminopimelate aminotransferase, found in Nitratidesulfovibrio vulgaris (strain DSM 19637 / Miyazaki F) (Desulfovibrio vulgaris).